A 255-amino-acid polypeptide reads, in one-letter code: Ribonuclease PH (255 aa).

Residues Arg-86 and 124-126 (GTR) contribute to the phosphate site.

The protein belongs to the RNase PH family. Homohexameric ring arranged as a trimer of dimers.

It carries out the reaction tRNA(n+1) + phosphate = tRNA(n) + a ribonucleoside 5'-diphosphate. Phosphorolytic 3'-5' exoribonuclease that plays an important role in tRNA 3'-end maturation. Removes nucleotide residues following the 3'-CCA terminus of tRNAs; can also add nucleotides to the ends of RNA molecules by using nucleoside diphosphates as substrates, but this may not be physiologically important. Probably plays a role in initiation of 16S rRNA degradation (leading to ribosome degradation) during starvation. The chain is Ribonuclease PH from Geobacillus sp. (strain WCH70).